The following is a 949-amino-acid chain: Nonsense-mediated mRNA decay factor SMG8 (949 aa).

3 disordered regions span residues 564 to 607 (SGAR…LSPT), 624 to 652 (NESQ…DTEN), and 748 to 768 (PKQQ…QQRW). A compositionally biased stretch (acidic residues) spans 571–581 (EGDDEPEDEVV). A compositionally biased stretch (polar residues) spans 594–607 (NTASNGCSQPLSPT). The span at 624 to 648 (NESQASSEQLSNSEQNTSSSGTSSA) shows a compositional bias: low complexity. A compositionally biased stretch (basic residues) spans 749–768 (KQQHHTHHQQQHPGKKQQRW).

This sequence belongs to the SMG8 family.

Its function is as follows. Involved in nonsense-mediated decay (NMD) of mRNAs containing premature stop codons. Probable component of kinase complex containing nonC and recruited to stalled ribosomes. This is Nonsense-mediated mRNA decay factor SMG8 from Drosophila erecta (Fruit fly).